A 208-amino-acid chain; its full sequence is Small ribosomal subunit protein uS4 (208 aa).

The tract at residues 30 to 51 is disordered; it reads KSSLEKRPYAPGQHGQRRSKIS. The S4 RNA-binding domain maps to 98 to 161; sequence RRLDNVVYRM…KNNPQVQRSI (64 aa).

This sequence belongs to the universal ribosomal protein uS4 family. Part of the 30S ribosomal subunit. Contacts protein S5. The interaction surface between S4 and S5 is involved in control of translational fidelity.

Functionally, one of the primary rRNA binding proteins, it binds directly to 16S rRNA where it nucleates assembly of the body of the 30S subunit. In terms of biological role, with S5 and S12 plays an important role in translational accuracy. The sequence is that of Small ribosomal subunit protein uS4 from Wolinella succinogenes (strain ATCC 29543 / DSM 1740 / CCUG 13145 / JCM 31913 / LMG 7466 / NCTC 11488 / FDC 602W) (Vibrio succinogenes).